The primary structure comprises 274 residues: MRLCGFEAGLDKPLFLIAGPCVIESEELALETAGYLKEMCSQLNIPFIYKSSFDKANRSSISSYRGPGFEKGLSILEKVKSQIGVPVLTDVHEDTPLFEVSSVVDVLQTPAFLCRQTNFIQKVAAMNKPVNIKKGQFLAPWEMKHVIAKAKAQGNEQIMACERGVSFGYNNLVSDMRSLVIMRETGCPVVYDATHSVQLPGGNNGVSGGQREFIPALARAAVAVGISGLFMETHPDPDNALSDGPNSWPLDKMKQLLESLKAADEVYKKYSTDF.

This sequence belongs to the KdsA family.

It is found in the cytoplasm. The enzyme catalyses D-arabinose 5-phosphate + phosphoenolpyruvate + H2O = 3-deoxy-alpha-D-manno-2-octulosonate-8-phosphate + phosphate. It functions in the pathway carbohydrate biosynthesis; 3-deoxy-D-manno-octulosonate biosynthesis; 3-deoxy-D-manno-octulosonate from D-ribulose 5-phosphate: step 2/3. Its pathway is bacterial outer membrane biogenesis; lipopolysaccharide biosynthesis. The polypeptide is 2-dehydro-3-deoxyphosphooctonate aldolase (Legionella pneumophila (strain Lens)).